A 376-amino-acid polypeptide reads, in one-letter code: Alpha-2,8-sialyltransferase 8E (376 aa).

Residues 1 to 17 are Cytoplasmic-facing; the sequence is MRYADPSANRDLLGNRT. Residues 18–38 form a helical; Signal-anchor for type II membrane protein membrane-spanning segment; the sequence is LLFIFICAFALVTLLQQILYG. Residues 39–376 are Lumenal-facing; the sequence is RNYIKRYFEF…RVHTGTCSCC (338 aa). Residues asparagine 56 and asparagine 96 are each glycosylated (N-linked (GlcNAc...) asparagine). Intrachain disulfides connect cysteine 164/cysteine 313 and cysteine 178/cysteine 373. Substrate contacts are provided by residues asparagine 192 and 214-216; that span reads NPS. N-linked (GlcNAc...) asparagine glycosylation is found at asparagine 241 and asparagine 284. 300–302 contacts substrate; sequence STG. Catalysis depends on histidine 348, which acts as the Proton donor/acceptor.

This sequence belongs to the glycosyltransferase 29 family.

It is found in the golgi apparatus membrane. The enzyme catalyses a ganglioside GQ1c (d18:1(4E)) + CMP-N-acetyl-beta-neuraminate = a ganglioside GP1c (d18:1(4E)) + CMP + H(+). Its pathway is protein modification; protein glycosylation. Involved in the synthesis of gangliosides GD1c, GT1a, GQ1b, GP1c and GT3 from GD1a, GT1b, GM1b and GD3 respectively. The chain is Alpha-2,8-sialyltransferase 8E (ST8SIA5) from Pan troglodytes (Chimpanzee).